The chain runs to 339 residues: MIAKIEQLLKEVEALHASNAEELEALRIKYLSKKGAINDLMADFRNVAAEQKKEVGMRLNELKTKAQDKINALKEQFESQDNSCDGLDLTRSAYPIELGTRHPITIVKNEVIDIFARLGFSIAEGPEIEDDWHVFSALNFAEDHPARDMQDTFFIEAHPDVVLRTHTSSVQTRVMETSKPPIRIICPGRVYRNEAISYRAHCFFHQVEALYVDKNVSFTDLKQVLLLFAKEMFGTDTKIRLRPSYFPFTEPSAEMDISCNICGGKGCPFCKHTGWVEILGCGMVDPNVLESNGIDSKVYSGYALGMGIERITNLKYQVKDLRMFSENDTRFLKEFEAAY.

Glutamate 250 contributes to the Mg(2+) binding site.

The protein belongs to the class-II aminoacyl-tRNA synthetase family. Phe-tRNA synthetase alpha subunit type 1 subfamily. In terms of assembly, tetramer of two alpha and two beta subunits. It depends on Mg(2+) as a cofactor.

Its subcellular location is the cytoplasm. The enzyme catalyses tRNA(Phe) + L-phenylalanine + ATP = L-phenylalanyl-tRNA(Phe) + AMP + diphosphate + H(+). The polypeptide is Phenylalanine--tRNA ligase alpha subunit (Bacteroides thetaiotaomicron (strain ATCC 29148 / DSM 2079 / JCM 5827 / CCUG 10774 / NCTC 10582 / VPI-5482 / E50)).